Consider the following 947-residue polypeptide: Protein translocase subunit SecA (947 aa).

ATP is bound by residues glutamine 87, 105 to 109, and aspartate 525; that span reads GEGKT. The segment at 905–928 is disordered; it reads PADNADKTARNPNDPSTWGKVGRN. 4 residues coordinate Zn(2+): cysteine 931, cysteine 933, cysteine 942, and histidine 943.

Belongs to the SecA family. As to quaternary structure, monomer and homodimer. Part of the essential Sec protein translocation apparatus which comprises SecA, SecYEG and auxiliary proteins SecDF-YajC and YidC. It depends on Zn(2+) as a cofactor.

Its subcellular location is the cell inner membrane. It is found in the cytoplasm. It carries out the reaction ATP + H2O + cellular proteinSide 1 = ADP + phosphate + cellular proteinSide 2.. In terms of biological role, part of the Sec protein translocase complex. Interacts with the SecYEG preprotein conducting channel. Has a central role in coupling the hydrolysis of ATP to the transfer of proteins into and across the cell membrane, serving both as a receptor for the preprotein-SecB complex and as an ATP-driven molecular motor driving the stepwise translocation of polypeptide chains across the membrane. This Rhodopseudomonas palustris (strain BisB18) protein is Protein translocase subunit SecA.